A 141-amino-acid polypeptide reads, in one-letter code: uncharacterized protein (141 aa).

It is found in the cytoplasm. This is an uncharacterized protein from Homo sapiens (Human).